We begin with the raw amino-acid sequence, 541 residues long: Peptidyl-alpha-hydroxyglycine alpha-amidating lyase 1 (541 aa).

The N-terminal stretch at 1 to 33 (MKSTDSAKCLGSKSLAICCLLLHLLLCIRPAVS) is a signal peptide. Topologically, residues 34–458 (QTQSPQRYLH…VAVHHPSGKA (425 aa)) are extracellular. Residue Asn92 is glycosylated (N-linked (GlcNAc...) asparagine). 3 NHL repeats span residues 164–205 (GKVQ…FPPR), 215–258 (LGDA…YSRK), and 272–314 (GISY…FLSS). Intrachain disulfides connect Cys228/Cys248 and Cys299/Cys310. Asn315 carries N-linked (GlcNAc...) asparagine glycosylation. The NHL 4 repeat unit spans residues 374-418 (KQLVSKFGPNNLQFQNPHDVAVTADGNEIYVAELNPMRIHKFVHR). The chain crosses the membrane as a helical span at residues 459–479 (ILVASLMLLFAGSTFALALIF). Over 480–541 (ARRRKRGCLP…TKTLASAQYA (62 aa)) the chain is Cytoplasmic. The segment at 521–541 (LDQQASDEEQETKTLASAQYA) is disordered.

The protein belongs to the peptidyl-alpha-hydroxyglycine alpha-amidating lyase family. Requires Zn(2+) as cofactor. Post-translationally, N-glycosylated. As to expression, widely expressed. In mature larvae, it is ubiquitously expressed with a low expression in all cells and a stronger expression in a subset of neurons. Colocalizes with neuropeptide proctolin. In adults, weak expression is observed in most neuronal cell bodies and in scattered large cells throughout the protocerebrum and also in the subesophageal neuromeres (at protein level).

The protein resides in the cell membrane. The catalysed reaction is a [peptide]-C-terminal (2S)-2-hydroxyglycine = a [peptide]-C-terminal amide + glyoxylate. Its function is as follows. Peptidyl-alpha-hydroxylglycine alpha-amidating lyase that catalyzes an essential reaction in C-terminal alpha-amidation of peptides. Mediates the dismutation of the unstable peptidyl(2-hydroxyglycine) intermediate to glyoxylate and the corresponding desglycine peptide amide. C-terminal amidation of peptides such as neuropeptides is essential for full biological activity. The polypeptide is Peptidyl-alpha-hydroxyglycine alpha-amidating lyase 1 (Pal1) (Drosophila melanogaster (Fruit fly)).